The primary structure comprises 114 residues: uncharacterized protein (114 aa).

Disordered stretches follow at residues 26–45 (GMKQ…DALG) and 72–98 (PKGS…SVQA).

This is an uncharacterized protein from Homo sapiens (Human).